The chain runs to 351 residues: UDP-3-O-acylglucosamine N-acyltransferase (351 aa).

The Proton acceptor role is filled by histidine 240.

The protein belongs to the transferase hexapeptide repeat family. LpxD subfamily. As to quaternary structure, homotrimer.

It carries out the reaction a UDP-3-O-[(3R)-3-hydroxyacyl]-alpha-D-glucosamine + a (3R)-hydroxyacyl-[ACP] = a UDP-2-N,3-O-bis[(3R)-3-hydroxyacyl]-alpha-D-glucosamine + holo-[ACP] + H(+). It participates in bacterial outer membrane biogenesis; LPS lipid A biosynthesis. Catalyzes the N-acylation of UDP-3-O-acylglucosamine using 3-hydroxyacyl-ACP as the acyl donor. Is involved in the biosynthesis of lipid A, a phosphorylated glycolipid that anchors the lipopolysaccharide to the outer membrane of the cell. In Ectopseudomonas mendocina (strain ymp) (Pseudomonas mendocina), this protein is UDP-3-O-acylglucosamine N-acyltransferase.